Consider the following 330-residue polypeptide: tRNA pseudouridine synthase B (330 aa).

D42 acts as the Nucleophile in catalysis.

Belongs to the pseudouridine synthase TruB family. Type 1 subfamily.

The enzyme catalyses uridine(55) in tRNA = pseudouridine(55) in tRNA. Its function is as follows. Responsible for synthesis of pseudouridine from uracil-55 in the psi GC loop of transfer RNAs. This is tRNA pseudouridine synthase B from Lactococcus lactis subsp. cremoris (strain SK11).